The following is a 549-amino-acid chain: T-complex protein 1 subunit theta (549 aa).

Belongs to the TCP-1 chaperonin family. As to quaternary structure, heterooligomeric complex of about 850 to 900 kDa that forms two stacked rings, 12 to 16 nm in diameter. Interacts with CCT3, KNAT1, STM and TTG1. In terms of tissue distribution, expressed in shoot meristems, root tip, vasculature and leaf epidermis.

The protein localises to the cytoplasm. Molecular chaperone; assists the folding of proteins upon ATP hydrolysis. Known to play a role, in vitro, in the folding of actin and tubulin. Contributes to stem cell maintenance through its impact on transcription factors trafficking through plasmodesmata. Probably involved in refolding translocated, partially unfolded proteins, including viral movement proteins. The chain is T-complex protein 1 subunit theta from Arabidopsis thaliana (Mouse-ear cress).